A 129-amino-acid polypeptide reads, in one-letter code: Large ribosomal subunit protein bL20 (129 aa).

Belongs to the bacterial ribosomal protein bL20 family.

Its function is as follows. Binds directly to 23S ribosomal RNA and is necessary for the in vitro assembly process of the 50S ribosomal subunit. It is not involved in the protein synthesizing functions of that subunit. This chain is Large ribosomal subunit protein bL20, found in Mycobacterium marinum (strain ATCC BAA-535 / M).